We begin with the raw amino-acid sequence, 222 residues long: Pyridoxine/pyridoxamine 5'-phosphate oxidase (222 aa).

FMN contacts are provided by residues 71–76 (RMVLLK), 86–87 (YT), lysine 93, and glutamine 115. Lysine 76 serves as a coordination point for substrate. 3 residues coordinate substrate: tyrosine 133, arginine 137, and serine 141. FMN-binding positions include 150-151 (QS) and tryptophan 195. Residue 201–203 (RLH) participates in substrate binding. Residue arginine 205 coordinates FMN.

The protein belongs to the pyridoxamine 5'-phosphate oxidase family. As to quaternary structure, homodimer. FMN is required as a cofactor.

It carries out the reaction pyridoxamine 5'-phosphate + O2 + H2O = pyridoxal 5'-phosphate + H2O2 + NH4(+). It catalyses the reaction pyridoxine 5'-phosphate + O2 = pyridoxal 5'-phosphate + H2O2. It functions in the pathway cofactor metabolism; pyridoxal 5'-phosphate salvage; pyridoxal 5'-phosphate from pyridoxamine 5'-phosphate: step 1/1. Its pathway is cofactor metabolism; pyridoxal 5'-phosphate salvage; pyridoxal 5'-phosphate from pyridoxine 5'-phosphate: step 1/1. Catalyzes the oxidation of either pyridoxine 5'-phosphate (PNP) or pyridoxamine 5'-phosphate (PMP) into pyridoxal 5'-phosphate (PLP). This Caulobacter vibrioides (strain ATCC 19089 / CIP 103742 / CB 15) (Caulobacter crescentus) protein is Pyridoxine/pyridoxamine 5'-phosphate oxidase.